The following is a 135-amino-acid chain: Sex-regulated protein janus-A (135 aa).

Lys37 contacts substrate. His63 (proton acceptor) is an active-site residue. Position 104 to 106 (104 to 106) interacts with substrate; it reads SQG.

This sequence belongs to the janus family.

In terms of biological role, janA and janB regulate somatic sex differentiation. In Drosophila yakuba (Fruit fly), this protein is Sex-regulated protein janus-A (janA).